Reading from the N-terminus, the 313-residue chain is Ornithine carbamoyltransferase (313 aa).

Carbamoyl phosphate-binding positions include serine 57–threonine 60, glutamine 84, arginine 108, and histidine 135–glutamine 138. L-ornithine is bound by residues asparagine 167, aspartate 231, and serine 235–methionine 236. Residues cysteine 272–leucine 273 and arginine 300 each bind carbamoyl phosphate.

The protein belongs to the aspartate/ornithine carbamoyltransferase superfamily. OTCase family.

It localises to the cytoplasm. The enzyme catalyses carbamoyl phosphate + L-ornithine = L-citrulline + phosphate + H(+). The protein operates within amino-acid biosynthesis; L-arginine biosynthesis; L-arginine from L-ornithine and carbamoyl phosphate: step 1/3. Reversibly catalyzes the transfer of the carbamoyl group from carbamoyl phosphate (CP) to the N(epsilon) atom of ornithine (ORN) to produce L-citrulline. The polypeptide is Ornithine carbamoyltransferase (Caldanaerobacter subterraneus subsp. tengcongensis (strain DSM 15242 / JCM 11007 / NBRC 100824 / MB4) (Thermoanaerobacter tengcongensis)).